The chain runs to 336 residues: Ornithine carbamoyltransferase, catabolic (336 aa).

Residues 57–60, Gln-84, Arg-108, and 135–138 contribute to the carbamoyl phosphate site; these read STRT and HPTQ. Residues Asn-169, Asp-233, and 237–238 each bind L-ornithine; that span reads SM. Carbamoyl phosphate contacts are provided by residues 275–276 and Arg-322; that span reads CL.

The protein belongs to the aspartate/ornithine carbamoyltransferase superfamily. OTCase family.

It localises to the cytoplasm. It carries out the reaction carbamoyl phosphate + L-ornithine = L-citrulline + phosphate + H(+). It functions in the pathway amino-acid degradation; L-arginine degradation via ADI pathway; carbamoyl phosphate from L-arginine: step 2/2. Functionally, reversibly catalyzes the transfer of the carbamoyl group from carbamoyl phosphate (CP) to the N(epsilon) atom of ornithine (ORN) to produce L-citrulline. This Photobacterium profundum (strain SS9) protein is Ornithine carbamoyltransferase, catabolic.